The sequence spans 83 residues: Small ribosomal subunit protein bS20 (83 aa).

It belongs to the bacterial ribosomal protein bS20 family.

Functionally, binds directly to 16S ribosomal RNA. The protein is Small ribosomal subunit protein bS20 of Flavobacterium johnsoniae (strain ATCC 17061 / DSM 2064 / JCM 8514 / BCRC 14874 / CCUG 350202 / NBRC 14942 / NCIMB 11054 / UW101) (Cytophaga johnsonae).